A 337-amino-acid polypeptide reads, in one-letter code: Large ribosomal subunit protein uL3 (337 aa).

A disordered region spans residues 1 to 20; the sequence is MASIHRPKRGSLAFSPRKRA.

This sequence belongs to the universal ribosomal protein uL3 family. In terms of assembly, part of the 50S ribosomal subunit. Forms a cluster with proteins L14 and L24e.

In terms of biological role, one of the primary rRNA binding proteins, it binds directly near the 3'-end of the 23S rRNA, where it nucleates assembly of the 50S subunit. This Methanosarcina mazei (strain ATCC BAA-159 / DSM 3647 / Goe1 / Go1 / JCM 11833 / OCM 88) (Methanosarcina frisia) protein is Large ribosomal subunit protein uL3.